Consider the following 348-residue polypeptide: NADH-quinone oxidoreductase subunit H (348 aa).

The next 9 helical transmembrane spans lie at 13-33, 50-70, 82-102, 115-135, 161-181, 198-218, 258-278, 285-305, and 321-341; these read LIMV…IAFL, PNVV…KFIL, AVFL…YAVI, VGIL…IMGG, IGLV…TDIV, FLDW…ISGL, AIVL…LPIV, WVPG…MIAL, and LGWK…AFVL.

This sequence belongs to the complex I subunit 1 family. As to quaternary structure, NDH-1 is composed of 14 different subunits. Subunits NuoA, H, J, K, L, M, N constitute the membrane sector of the complex.

Its subcellular location is the cell inner membrane. It carries out the reaction a quinone + NADH + 5 H(+)(in) = a quinol + NAD(+) + 4 H(+)(out). Functionally, NDH-1 shuttles electrons from NADH, via FMN and iron-sulfur (Fe-S) centers, to quinones in the respiratory chain. The immediate electron acceptor for the enzyme in this species is believed to be ubiquinone. Couples the redox reaction to proton translocation (for every two electrons transferred, four hydrogen ions are translocated across the cytoplasmic membrane), and thus conserves the redox energy in a proton gradient. This subunit may bind ubiquinone. The polypeptide is NADH-quinone oxidoreductase subunit H (Agrobacterium fabrum (strain C58 / ATCC 33970) (Agrobacterium tumefaciens (strain C58))).